Here is a 399-residue protein sequence, read N- to C-terminus: Probable WRKY transcription factor 48 (399 aa).

2 stretches are compositionally biased toward basic and acidic residues: residues 1–11 and 19–38; these read MEKKKEEDHHH and KEIKNTETKIEQEQEQEQKQ. Disordered regions lie at residues 1–57 and 138–202; these read MEKK…TSSD and AESS…KNQK. Over residues 143 to 161 the composition is skewed to low complexity; the sequence is VVNTTPTSPNSTSVSSSSN. A compositionally biased stretch (polar residues) spans 162–171; it reads EAANDNNSGK. Residues 184–193 show a composition bias toward low complexity; the sequence is QQEQKGTKPQ. Positions 215–280 form a DNA-binding region, WRKY; the sequence is SDIDNLDDGY…YEGQHTHPFP (66 aa). The interval 361–399 is disordered; the sequence is QASTSTSSSIRDHGLLQDILPSQIRSDTINTQTNEENKK. A compositionally biased stretch (polar residues) spans 383–399; that stretch reads QIRSDTINTQTNEENKK.

It is found in the nucleus. Its function is as follows. Transcription factor. Interacts specifically with the W box (5'-(T)TGAC[CT]-3'), a frequently occurring elicitor-responsive cis-acting element. This chain is Probable WRKY transcription factor 48 (WRKY48), found in Arabidopsis thaliana (Mouse-ear cress).